A 489-amino-acid chain; its full sequence is Rhamnulokinase (489 aa).

13–17 contacts ATP; sequence ASSGR. Cysteines 68 and 222 form a disulfide. Substrate-binding positions include Gly83 and 236–238; that span reads HDT. The Proton acceptor role is filled by Asp237. Thr259 contributes to the ATP binding site. Residue Asn296 coordinates substrate. ATP is bound at residue Gln304. Cys353 and Cys370 are disulfide-bonded. Position 402 (Gly402) interacts with ATP. Cys413 and Cys417 are disulfide-bonded.

It belongs to the rhamnulokinase family. Mg(2+) serves as cofactor.

It catalyses the reaction L-rhamnulose + ATP = L-rhamnulose 1-phosphate + ADP + H(+). It participates in carbohydrate degradation; L-rhamnose degradation; glycerone phosphate from L-rhamnose: step 2/3. Its function is as follows. Involved in the catabolism of L-rhamnose (6-deoxy-L-mannose). Catalyzes the transfer of the gamma-phosphate group from ATP to the 1-hydroxyl group of L-rhamnulose to yield L-rhamnulose 1-phosphate. The polypeptide is Rhamnulokinase (Salmonella typhimurium (strain LT2 / SGSC1412 / ATCC 700720)).